A 414-amino-acid polypeptide reads, in one-letter code: Lysosome-associated membrane glycoprotein 1 (414 aa).

The signal sequence occupies residues 1 to 18; that stretch reads MGGAARAVLLGFLQASSS. Positions 19–181 are first lumenal domain; it reads FDVRDSTGKV…SANKTECRED (163 aa). Topologically, residues 19–379 are lumenal; sequence FDVRDSTGKV…EECQLDENNM (361 aa). A disulfide bond links Cys29 and Cys67. Asn33, Asn58, Asn71, Asn90, Asn108, Asn117, Asn154, Asn159, Asn168, and Asn174 each carry an N-linked (GlcNAc...) asparagine glycan. Cys142 and Cys178 are joined by a disulfide. A hinge region spans residues 182 to 224; the sequence is MVSTTTVAPTTPKHATSQVPTTSPAPTAAPSSPAVGKYNVTGA. The segment at 186–213 is disordered; the sequence is TTVAPTTPKHATSQVPTTSPAPTAAPSS. Low complexity predominate over residues 196-213; sequence ATSQVPTTSPAPTAAPSS. 7 N-linked (GlcNAc...) asparagine glycosylation sites follow: Asn220, Asn225, Asn238, Asn259, Asn289, Asn301, and Asn319. The interval 225–379 is second lumenal domain; sequence NGTCVLASMG…EECQLDENNM (155 aa). Cys228 and Cys266 are disulfide-bonded. Cys335 and Cys372 are disulfide-bonded. Residues 380-403 traverse the membrane as a helical segment; the sequence is LIPIIVGAALAGLVLIVLIAYLIG. Residues 404–414 are Cytoplasmic-facing; that stretch reads RKRSHAGYQTI.

It belongs to the LAMP family.

Its subcellular location is the lysosome membrane. It localises to the endosome membrane. It is found in the late endosome membrane. The protein localises to the cell membrane. The protein resides in the cytolytic granule membrane. In terms of biological role, lysosomal membrane glycoprotein which plays an important role in lysosome biogenesis, lysosomal pH regulation, autophagy and cholesterol homeostasis. (Microbial infection) Plays an essential role in efficient replication and spread of Marek's disease virus, by facilitating viral cell-to-cell spread. The chain is Lysosome-associated membrane glycoprotein 1 (LAMP1) from Gallus gallus (Chicken).